The sequence spans 681 residues: Type VI secretion system spike protein VgrG1 (681 aa).

The segment at 621-640 is disordered; the sequence is NSGGSPSSGSGWGGKSPVDP.

Belongs to the VgrG protein family.

Its subcellular location is the secreted. The enzyme catalyses L-arginyl-[protein] + NAD(+) = N(omega)-(ADP-D-ribosyl)-L-arginyl-[protein] + nicotinamide + H(+). In terms of biological role, part of the type VI secretion system specialized secretion system, which delivers several virulence factors in both prokaryotic and eukaryotic cells during infection. Acts directly as an secreted effector with an actin ADP-ribosyltransferase activity that disrupts the host actin cytoskeleton, leading to a decrease in host cell viability and an increase in apoptosis. The sequence is that of Type VI secretion system spike protein VgrG1 (vgrG1) from Aeromonas hydrophila.